We begin with the raw amino-acid sequence, 415 residues long: Camphor 5-monooxygenase (415 aa).

C358 lines the heme pocket.

The protein belongs to the cytochrome P450 family. The cofactor is heme.

Its subcellular location is the cytoplasm. The enzyme catalyses 2 reduced [2Fe-2S]-[putidaredoxin] + (1R,4R)-camphor + O2 + 2 H(+) = (1R,4R,5R)-5-hydroxycamphor + 2 oxidized [2Fe-2S]-[putidaredoxin] + H2O. The protein operates within terpene metabolism; (R)-camphor degradation. Functionally, involved in a camphor oxidation system. This is Camphor 5-monooxygenase (camC) from Pseudomonas putida (Arthrobacter siderocapsulatus).